The sequence spans 170 residues: Thioredoxin-like protein YneN (170 aa).

The helical transmembrane segment at 5–23 (WLAGILLIMLVGYTGWNLY) threads the bilayer. In terms of domain architecture, Thioredoxin spans 33–170 (IQEGQQAPDF…KEMEQKLDLD (138 aa)). Cys71 and Cys74 are joined by a disulfide.

Belongs to the thioredoxin family.

It is found in the cell membrane. This chain is Thioredoxin-like protein YneN (yneN), found in Bacillus subtilis (strain 168).